The sequence spans 322 residues: Probable heme-iron transport system permease protein IsdF (322 aa).

Helical transmembrane passes span 9–29, 61–81, 89–109, 114–134, 143–163, 179–199, 233–253, 267–287, and 294–314; these read LLFL…FVTG, ILIA…LQAA, ANII…MLFI, FYLP…IILL, VSMI…LEIL, IWSD…LTLL, VFLA…GIIV, VLIP…DLLG, and LEIP…IYLI.

Belongs to the binding-protein-dependent transport system permease family. FecCD subfamily.

Its subcellular location is the cell membrane. In terms of biological role, part of the binding-protein-dependent transport system for heme-iron. Responsible for the translocation of the substrate across the membrane. In Staphylococcus aureus (strain Mu3 / ATCC 700698), this protein is Probable heme-iron transport system permease protein IsdF (isdF).